We begin with the raw amino-acid sequence, 348 residues long: GTPase Obg (348 aa).

One can recognise an Obg domain in the interval 1–159; it reads MKFLDLAKVY…RTIWLRLKLI (159 aa). One can recognise an OBG-type G domain in the interval 160–327; the sequence is ADAGLLGLPN…VLRAVRAEID (168 aa). Residues 166–173, 191–195, 212–215, 279–282, and 308–310 each bind GTP; these read GLPNAGKS, FTTLH, DIPG, NKID, and SSV. Mg(2+) is bound by residues serine 173 and threonine 193.

It belongs to the TRAFAC class OBG-HflX-like GTPase superfamily. OBG GTPase family. In terms of assembly, monomer. The cofactor is Mg(2+).

The protein resides in the cytoplasm. Its function is as follows. An essential GTPase which binds GTP, GDP and possibly (p)ppGpp with moderate affinity, with high nucleotide exchange rates and a fairly low GTP hydrolysis rate. Plays a role in control of the cell cycle, stress response, ribosome biogenesis and in those bacteria that undergo differentiation, in morphogenesis control. This chain is GTPase Obg, found in Ruegeria sp. (strain TM1040) (Silicibacter sp.).